The chain runs to 246 residues: 4-hydroxy-tetrahydrodipicolinate reductase (246 aa).

NAD(+) contacts are provided by residues 8-13 (GALGRM), Asp34, 74-76 (GTT), and 101-104 (APNF). The active-site Proton donor/acceptor is His131. His132 provides a ligand contact to (S)-2,3,4,5-tetrahydrodipicolinate. Lys135 functions as the Proton donor in the catalytic mechanism. 141-142 (GT) lines the (S)-2,3,4,5-tetrahydrodipicolinate pocket.

The protein belongs to the DapB family.

It is found in the cytoplasm. It catalyses the reaction (S)-2,3,4,5-tetrahydrodipicolinate + NAD(+) + H2O = (2S,4S)-4-hydroxy-2,3,4,5-tetrahydrodipicolinate + NADH + H(+). It carries out the reaction (S)-2,3,4,5-tetrahydrodipicolinate + NADP(+) + H2O = (2S,4S)-4-hydroxy-2,3,4,5-tetrahydrodipicolinate + NADPH + H(+). The protein operates within amino-acid biosynthesis; L-lysine biosynthesis via DAP pathway; (S)-tetrahydrodipicolinate from L-aspartate: step 4/4. In terms of biological role, catalyzes the conversion of 4-hydroxy-tetrahydrodipicolinate (HTPA) to tetrahydrodipicolinate. This is 4-hydroxy-tetrahydrodipicolinate reductase from Thermobifida fusca (strain YX).